We begin with the raw amino-acid sequence, 187 residues long: Elongation factor P (187 aa).

The protein belongs to the elongation factor P family.

It is found in the cytoplasm. It participates in protein biosynthesis; polypeptide chain elongation. Its function is as follows. Involved in peptide bond synthesis. Stimulates efficient translation and peptide-bond synthesis on native or reconstituted 70S ribosomes in vitro. Probably functions indirectly by altering the affinity of the ribosome for aminoacyl-tRNA, thus increasing their reactivity as acceptors for peptidyl transferase. This Treponema pallidum (strain Nichols) protein is Elongation factor P (efp).